Consider the following 262-residue polypeptide: tRNA (guanine-N(1)-)-methyltransferase (262 aa).

S-adenosyl-L-methionine contacts are provided by residues Gly-111 and 130–135 (LGDFVL).

The protein belongs to the RNA methyltransferase TrmD family. Homodimer.

Its subcellular location is the cytoplasm. It carries out the reaction guanosine(37) in tRNA + S-adenosyl-L-methionine = N(1)-methylguanosine(37) in tRNA + S-adenosyl-L-homocysteine + H(+). Functionally, specifically methylates guanosine-37 in various tRNAs. The polypeptide is tRNA (guanine-N(1)-)-methyltransferase (Desulfitobacterium hafniense (strain Y51)).